The sequence spans 137 residues: Large ribosomal subunit protein uL16 (137 aa).

It belongs to the universal ribosomal protein uL16 family. Part of the 50S ribosomal subunit.

Binds 23S rRNA and is also seen to make contacts with the A and possibly P site tRNAs. The polypeptide is Large ribosomal subunit protein uL16 (Maricaulis maris (strain MCS10) (Caulobacter maris)).